The following is a 127-amino-acid chain: uncharacterized protein (127 aa).

The tract at residues 1 to 34 (MKNPESSGVSSSPQIQRVSPSSSSTSPSPPSIGT) is disordered. The span at 9–34 (VSSSPQIQRVSPSSSSTSPSPPSIGT) shows a compositional bias: low complexity. The next 2 helical transmembrane spans lie at 47 to 67 (IAAVVVAVDVVDIMSVDPLAM) and 84 to 104 (TIAVDSITLLYTPICLCYLLV).

The protein resides in the membrane. This is an uncharacterized protein from Saccharomyces cerevisiae (strain ATCC 204508 / S288c) (Baker's yeast).